A 540-amino-acid chain; its full sequence is Chaperonin GroEL (540 aa).

Residues 29-32 (TLGP), 86-90 (DGTTT), Gly413, 476-478 (NAA), and Asp492 contribute to the ATP site.

The protein belongs to the chaperonin (HSP60) family. As to quaternary structure, forms a cylinder of 14 subunits composed of two heptameric rings stacked back-to-back. Interacts with the co-chaperonin GroES.

It is found in the cytoplasm. It carries out the reaction ATP + H2O + a folded polypeptide = ADP + phosphate + an unfolded polypeptide.. Together with its co-chaperonin GroES, plays an essential role in assisting protein folding. The GroEL-GroES system forms a nano-cage that allows encapsulation of the non-native substrate proteins and provides a physical environment optimized to promote and accelerate protein folding. The polypeptide is Chaperonin GroEL (Streptococcus agalactiae serotype V (strain ATCC BAA-611 / 2603 V/R)).